Reading from the N-terminus, the 118-residue chain is uncharacterized protein (118 aa).

This is an uncharacterized protein from Caenorhabditis elegans.